We begin with the raw amino-acid sequence, 120 residues long: Late histone H2A.2.2 (120 aa).

Positions 1-18 are enriched in basic residues; that stretch reads MSGRGKGAKSKSKAKSRS. Residues 1-22 form a disordered region; it reads MSGRGKGAKSKSKAKSRSSRAG. An N-acetylserine modification is found at Ser2. Ser2 carries the post-translational modification Phosphoserine. Position 104 is an N5-methylglutamine (Gln104). A Glycyl lysine isopeptide (Lys-Gly) (interchain with G-Cter in ubiquitin) cross-link involves residue Lys119.

The protein belongs to the histone H2A family. In terms of assembly, the nucleosome is a histone octamer containing two molecules each of H2A, H2B, H3 and H4 assembled in one H3-H4 heterotetramer and two H2A-H2B heterodimers. The octamer wraps approximately 147 bp of DNA. In terms of processing, monoubiquitination of Lys-119 gives a specific tag for epigenetic transcriptional repression. Post-translationally, phosphorylation of Ser-2 directly represses transcription.

The protein localises to the nucleus. Its subcellular location is the chromosome. Core component of nucleosome. Nucleosomes wrap and compact DNA into chromatin, limiting DNA accessibility to the cellular machineries which require DNA as a template. Histones thereby play a central role in transcription regulation, DNA repair, DNA replication and chromosomal stability. DNA accessibility is regulated via a complex set of post-translational modifications of histones, also called histone code, and nucleosome remodeling. This Psammechinus miliaris (Green sea urchin) protein is Late histone H2A.2.2.